The sequence spans 92 residues: Small ribosomal subunit protein uS19 (92 aa).

It belongs to the universal ribosomal protein uS19 family.

Protein S19 forms a complex with S13 that binds strongly to the 16S ribosomal RNA. The protein is Small ribosomal subunit protein uS19 of Lactococcus lactis subsp. cremoris (strain MG1363).